A 201-amino-acid chain; its full sequence is Small ribosomal subunit protein uS4c (201 aa).

The tract at residues 15–43 (LGALPGLTRKTPKSGSNQKKKFHSGKKEQ) is disordered. One can recognise an S4 RNA-binding domain in the interval 89 to 150 (MRLDNILFRL…NQRSKRLVQN (62 aa)).

It belongs to the universal ribosomal protein uS4 family. As to quaternary structure, part of the 30S ribosomal subunit. Contacts protein S5. The interaction surface between S4 and S5 is involved in control of translational fidelity.

It is found in the plastid. The protein localises to the chloroplast. One of the primary rRNA binding proteins, it binds directly to 16S rRNA where it nucleates assembly of the body of the 30S subunit. Functionally, with S5 and S12 plays an important role in translational accuracy. The protein is Small ribosomal subunit protein uS4c (rps4) of Sorghum bicolor (Sorghum).